The chain runs to 884 residues: Protein translocase subunit SecA (884 aa).

Residues Gln82, 100 to 104 (GEGKT), and Asp491 contribute to the ATP site.

This sequence belongs to the SecA family.

It is found in the plastid. Its subcellular location is the chloroplast stroma. It localises to the chloroplast thylakoid membrane. It catalyses the reaction ATP + H2O + cellular proteinSide 1 = ADP + phosphate + cellular proteinSide 2.. In terms of biological role, has a central role in coupling the hydrolysis of ATP to the transfer of proteins across the thylakoid membrane. The protein is Protein translocase subunit SecA of Olisthodiscus luteus (Marine phytoflagellate).